A 307-amino-acid chain; its full sequence is Ribonuclease H2 subunit B (307 aa).

Residue alanine 2 is modified to N-acetylalanine. Lysine 291 is modified (N6-acetyllysine). At serine 292 the chain carries Phosphoserine.

Belongs to the RNase H2 subunit B family. The RNase H2 complex is a heterotrimer composed of the catalytic subunit RNASEH2A and the non-catalytic subunits RNASEH2B and RNASEH2C.

It is found in the nucleus. Functionally, non catalytic subunit of RNase H2, an endonuclease that specifically degrades the RNA of RNA:DNA hybrids. Participates in DNA replication, possibly by mediating the removal of lagging-strand Okazaki fragment RNA primers during DNA replication. Mediates the excision of single ribonucleotides from DNA:RNA duplexes. The chain is Ribonuclease H2 subunit B (Rnaseh2b) from Rattus norvegicus (Rat).